The sequence spans 118 residues: Holo-[acyl-carrier-protein] synthase (118 aa).

The Mg(2+) site is built by Asp-8 and Glu-58.

Belongs to the P-Pant transferase superfamily. AcpS family. Requires Mg(2+) as cofactor.

It localises to the cytoplasm. It carries out the reaction apo-[ACP] + CoA = holo-[ACP] + adenosine 3',5'-bisphosphate + H(+). Transfers the 4'-phosphopantetheine moiety from coenzyme A to a Ser of acyl-carrier-protein. In Streptococcus equi subsp. zooepidemicus (strain MGCS10565), this protein is Holo-[acyl-carrier-protein] synthase.